We begin with the raw amino-acid sequence, 160 residues long: MVATSEPKIAVKAQYVKDLSFENPDPINSLFKITEKPKIDTKLDINITKLSEDNHFEVELSTNVSATCNDKKIFHIEVVYAGIFQLTNISEEDKKFILSVRCPEIIFPYVRQIISESTQKGGFLPLMIDYIDFAEIISNTQTTNNPQKSIKPEFDVSNKQ.

Belongs to the SecB family. As to quaternary structure, homotetramer, a dimer of dimers. One homotetramer interacts with 1 SecA dimer.

It localises to the cytoplasm. Functionally, one of the proteins required for the normal export of preproteins out of the cell cytoplasm. It is a molecular chaperone that binds to a subset of precursor proteins, maintaining them in a translocation-competent state. It also specifically binds to its receptor SecA. This is Protein-export protein SecB from Orientia tsutsugamushi (strain Boryong) (Rickettsia tsutsugamushi).